The following is a 229-amino-acid chain: Small ribosomal subunit protein uS3 (229 aa).

A KH type-2 domain is found at 39–107; it reads VRKFLEKKLK…PAQINIAEIR (69 aa).

This sequence belongs to the universal ribosomal protein uS3 family. In terms of assembly, part of the 30S ribosomal subunit. Forms a tight complex with proteins S10 and S14.

Functionally, binds the lower part of the 30S subunit head. Binds mRNA in the 70S ribosome, positioning it for translation. This Shewanella loihica (strain ATCC BAA-1088 / PV-4) protein is Small ribosomal subunit protein uS3.